The sequence spans 156 residues: Aspartate carbamoyltransferase regulatory chain (156 aa).

Cysteine 107, cysteine 112, cysteine 137, and cysteine 140 together coordinate Zn(2+).

This sequence belongs to the PyrI family. Contains catalytic and regulatory chains. It depends on Zn(2+) as a cofactor.

Functionally, involved in allosteric regulation of aspartate carbamoyltransferase. The protein is Aspartate carbamoyltransferase regulatory chain of Methanopyrus kandleri (strain AV19 / DSM 6324 / JCM 9639 / NBRC 100938).